The primary structure comprises 100 residues: Small ribosomal subunit protein uS14m (100 aa).

The protein belongs to the universal ribosomal protein uS14 family.

Its subcellular location is the mitochondrion. This chain is Small ribosomal subunit protein uS14m (RPS14), found in Vicia faba (Broad bean).